The chain runs to 318 residues: NF-kappa-B inhibitor alpha (318 aa).

The tract at residues 1–44 (MLSAHRPAEPPAVEGCEPPRKERQGGLLPPDDRHDSGLDSMKEE) is disordered. Over residues 17–44 (EPPRKERQGGLLPPDDRHDSGLDSMKEE) the composition is skewed to basic and acidic residues. Lys-21 is covalently cross-linked (Glycyl lysine isopeptide (Lys-Gly) (interchain with G-Cter in ubiquitin)). Ser-36 is subject to Phosphoserine; by IKKA and IKKB. At Ser-40 the chain carries Phosphoserine; by IKKA, IKKB and IKKE. Tyr-46 is subject to Phosphotyrosine; by Tyr-kinases. ANK repeat units lie at residues 114–143 (LSQT…DLDV), 147–176 (RGNT…PHHL), 186–215 (NGHT…DVNA), and 220–249 (NGRT…DVNK).

Belongs to the NF-kappa-B inhibitor family. Post-translationally, phosphorylated at Ser-36 and Ser-40 by IKKA/CHUK and IKKB/IKBKB; disables inhibition of NF-kappa-B DNA-binding activity. Phosphorylation at positions 36 and 40 is prerequisite to polyubiquitination and subsequent degradation. Monoubiquitinated at Lys-21 following phosphorylation at Ser-36 and Ser-40. The resulting polyubiquitination leads to protein degradation. In terms of processing, hydroxylated by HIF1AN. In terms of tissue distribution, highly expressed in lymph node, thymus followed by liver, brain, muscle, kidney, gastrointestinal and reproductive tract.

The protein localises to the cytoplasm. It localises to the nucleus. In terms of biological role, inhibits the activity of dimeric NF-kappa-B/REL complexes by trapping REL (RELA/p65 and NFKB1/p50) dimers in the cytoplasm by masking their nuclear localization signals. On cellular stimulation by immune and pro-inflammatory responses, becomes phosphorylated promoting ubiquitination and degradation, enabling the dimeric RELA to translocate to the nucleus and activate transcription. This is NF-kappa-B inhibitor alpha (NFKBIA) from Gallus gallus (Chicken).